A 62-amino-acid chain; its full sequence is Large ribosomal subunit protein uL30 (62 aa).

It belongs to the universal ribosomal protein uL30 family. In terms of assembly, part of the 50S ribosomal subunit.

This Thioalkalivibrio sulfidiphilus (strain HL-EbGR7) protein is Large ribosomal subunit protein uL30.